Reading from the N-terminus, the 491-residue chain is AAA-ATPase At2g46620 (491 aa).

A helical membrane pass occupies residues 1–21; the sequence is MGILWDSFLLLLVSTFALFLV. 238–245 serves as a coordination point for ATP; it reads GPSGTGKS. The segment at 423–460 is disordered; sequence GTGRRLLLENGSRKSTSEDVSDDMSGSLCGGGGGSSPA.

Belongs to the AAA ATPase family. BCS1 subfamily. Requires Mg(2+) as cofactor.

The protein localises to the membrane. It catalyses the reaction ATP + H2O = ADP + phosphate + H(+). This chain is AAA-ATPase At2g46620, found in Arabidopsis thaliana (Mouse-ear cress).